The sequence spans 51 residues: Large ribosomal subunit protein bL33 (51 aa).

It belongs to the bacterial ribosomal protein bL33 family.

The polypeptide is Large ribosomal subunit protein bL33 (Pseudoalteromonas atlantica (strain T6c / ATCC BAA-1087)).